Here is a 326-residue protein sequence, read N- to C-terminus: 4-hydroxythreonine-4-phosphate dehydrogenase (326 aa).

H132 and T133 together coordinate substrate. A divalent metal cation is bound by residues H162, H207, and H262. Substrate is bound by residues K270, N279, and R288.

The protein belongs to the PdxA family. In terms of assembly, homodimer. Requires Zn(2+) as cofactor. The cofactor is Mg(2+). It depends on Co(2+) as a cofactor.

The protein localises to the cytoplasm. It catalyses the reaction 4-(phosphooxy)-L-threonine + NAD(+) = 3-amino-2-oxopropyl phosphate + CO2 + NADH. It participates in cofactor biosynthesis; pyridoxine 5'-phosphate biosynthesis; pyridoxine 5'-phosphate from D-erythrose 4-phosphate: step 4/5. Functionally, catalyzes the NAD(P)-dependent oxidation of 4-(phosphooxy)-L-threonine (HTP) into 2-amino-3-oxo-4-(phosphooxy)butyric acid which spontaneously decarboxylates to form 3-amino-2-oxopropyl phosphate (AHAP). The protein is 4-hydroxythreonine-4-phosphate dehydrogenase of Ruegeria sp. (strain TM1040) (Silicibacter sp.).